A 329-amino-acid polypeptide reads, in one-letter code: D-alanine--D-alanine ligase (329 aa).

The ATP-grasp domain occupies lysine 120 to asparagine 326. Alanine 150–glutamate 205 provides a ligand contact to ATP. The Mg(2+) site is built by aspartate 280, glutamate 293, and asparagine 295.

It belongs to the D-alanine--D-alanine ligase family. Mg(2+) serves as cofactor. It depends on Mn(2+) as a cofactor.

The protein localises to the cytoplasm. The catalysed reaction is 2 D-alanine + ATP = D-alanyl-D-alanine + ADP + phosphate + H(+). The protein operates within cell wall biogenesis; peptidoglycan biosynthesis. Its function is as follows. Cell wall formation. The sequence is that of D-alanine--D-alanine ligase from Vibrio parahaemolyticus serotype O3:K6 (strain RIMD 2210633).